The following is a 137-amino-acid chain: ATP synthase epsilon chain (137 aa).

Belongs to the ATPase epsilon chain family. F-type ATPases have 2 components, CF(1) - the catalytic core - and CF(0) - the membrane proton channel. CF(1) has five subunits: alpha(3), beta(3), gamma(1), delta(1), epsilon(1). CF(0) has three main subunits: a, b and c.

The protein localises to the cellular thylakoid membrane. Produces ATP from ADP in the presence of a proton gradient across the membrane. This chain is ATP synthase epsilon chain, found in Trichodesmium erythraeum (strain IMS101).